We begin with the raw amino-acid sequence, 534 residues long: Probable alanine aminotransferase, mitochondrial (534 aa).

A mitochondrion-targeting transit peptide spans 1-18; sequence MFKRSLKVLLSNPPINRV. At Lys-352 the chain carries N6-(pyridoxal phosphate)lysine.

Belongs to the class-I pyridoxal-phosphate-dependent aminotransferase family. Alanine aminotransferase subfamily. Homodimer. Pyridoxal 5'-phosphate serves as cofactor.

The protein resides in the mitochondrion matrix. The enzyme catalyses L-alanine + 2-oxoglutarate = pyruvate + L-glutamate. It functions in the pathway amino-acid degradation; L-alanine degradation via transaminase pathway; pyruvate from L-alanine: step 1/1. The polypeptide is Probable alanine aminotransferase, mitochondrial (gpt) (Dictyostelium discoideum (Social amoeba)).